The chain runs to 198 residues: Recombination protein RecR (198 aa).

The C4-type zinc finger occupies 57–72 (CLNCGCLTDEAACYFC). In terms of domain architecture, Toprim spans 80 to 175 (QIICVTAFPR…QISRLAFGLP (96 aa)).

The protein belongs to the RecR family.

Functionally, may play a role in DNA repair. It seems to be involved in an RecBC-independent recombinational process of DNA repair. It may act with RecF and RecO. The polypeptide is Recombination protein RecR (Protochlamydia amoebophila (strain UWE25)).